The primary structure comprises 397 residues: Ribosomal RNA large subunit methyltransferase I (397 aa).

The 78-residue stretch at 2-79 folds into the PUA domain; sequence SASIYLVKGR…KEETVDLDFF (78 aa).

The protein belongs to the methyltransferase superfamily. RlmI family.

Its subcellular location is the cytoplasm. It carries out the reaction cytidine(1962) in 23S rRNA + S-adenosyl-L-methionine = 5-methylcytidine(1962) in 23S rRNA + S-adenosyl-L-homocysteine + H(+). Specifically methylates the cytosine at position 1962 (m5C1962) of 23S rRNA. The chain is Ribosomal RNA large subunit methyltransferase I from Aeromonas hydrophila subsp. hydrophila (strain ATCC 7966 / DSM 30187 / BCRC 13018 / CCUG 14551 / JCM 1027 / KCTC 2358 / NCIMB 9240 / NCTC 8049).